A 187-amino-acid polypeptide reads, in one-letter code: Orotate phosphoribosyltransferase (187 aa).

5-phospho-alpha-D-ribose 1-diphosphate contacts are provided by residues R98, K99, K102, H104, and 128–136 (EDVTTTGGS). Residues T132 and R160 each coordinate orotate.

This sequence belongs to the purine/pyrimidine phosphoribosyltransferase family. PyrE subfamily. In terms of assembly, homodimer. The cofactor is Mg(2+).

It carries out the reaction orotidine 5'-phosphate + diphosphate = orotate + 5-phospho-alpha-D-ribose 1-diphosphate. It participates in pyrimidine metabolism; UMP biosynthesis via de novo pathway; UMP from orotate: step 1/2. In terms of biological role, catalyzes the transfer of a ribosyl phosphate group from 5-phosphoribose 1-diphosphate to orotate, leading to the formation of orotidine monophosphate (OMP). This chain is Orotate phosphoribosyltransferase, found in Rhodopseudomonas palustris (strain BisB5).